Consider the following 80-residue polypeptide: uncharacterized protein (80 aa).

A disordered region spans residues 57-80; it reads GNIDSDVSDQDQIGNPSAPISNQI.

This is an uncharacterized protein from Bacillus subtilis (strain 168).